Here is a 312-residue protein sequence, read N- to C-terminus: Ribosomal RNA small subunit methyltransferase H (312 aa).

S-adenosyl-L-methionine contacts are provided by residues 33–35 (SGH), Asp53, Phe80, Asp101, and Gln108.

It belongs to the methyltransferase superfamily. RsmH family.

The protein localises to the cytoplasm. The catalysed reaction is cytidine(1402) in 16S rRNA + S-adenosyl-L-methionine = N(4)-methylcytidine(1402) in 16S rRNA + S-adenosyl-L-homocysteine + H(+). In terms of biological role, specifically methylates the N4 position of cytidine in position 1402 (C1402) of 16S rRNA. This chain is Ribosomal RNA small subunit methyltransferase H, found in Desulforapulum autotrophicum (strain ATCC 43914 / DSM 3382 / VKM B-1955 / HRM2) (Desulfobacterium autotrophicum).